An 873-amino-acid polypeptide reads, in one-letter code: Protein SEY1 (873 aa).

Topologically, residues 1–750 (MVANGHFFAG…KRSAIGGITQ (750 aa)) are cytoplasmic. The region spanning 50–308 (GFNYHLISVF…IPADGFAVYA (259 aa)) is the GB1/RHD3-type G domain. 60–67 (GSQSTGKS) lines the GTP pocket. Residues 677-701 (LDKWIGHTPSSATPADEEDLTPIGG) form a disordered region. Residues 691 to 701 (ADEEDLTPIGG) show a composition bias toward acidic residues. The helical transmembrane segment at 751–771 (VPLYFYGLLLALGWNEIVAVL) threads the bilayer. Over 772–774 (RNP) the chain is Lumenal. A helical membrane pass occupies residues 775–795 (AYFLLLFVCAVTAYVTYQLNL). At 796–873 (WGPIIKMTEA…IDDADDDDDF (78 aa)) the chain is on the cytoplasmic side. Residues 841–873 (EGYDMSNMKNRKSAGGYQNNRSHIDDADDDDDF) are disordered.

Belongs to the TRAFAC class dynamin-like GTPase superfamily. GB1/RHD3 GTPase family. RHD3 subfamily.

It localises to the endoplasmic reticulum membrane. Cooperates with the reticulon proteins and tubule-shaping DP1 family proteins to generate and maintain the structure of the tubular endoplasmic reticulum network. Has GTPase activity, which is required for its function in ER organization. The sequence is that of Protein SEY1 from Paracoccidioides lutzii (strain ATCC MYA-826 / Pb01) (Paracoccidioides brasiliensis).